A 328-amino-acid chain; its full sequence is Phosphate acyltransferase (328 aa).

The protein belongs to the PlsX family. In terms of assembly, homodimer. Probably interacts with PlsY.

It localises to the cytoplasm. The catalysed reaction is a fatty acyl-[ACP] + phosphate = an acyl phosphate + holo-[ACP]. It participates in lipid metabolism; phospholipid metabolism. In terms of biological role, catalyzes the reversible formation of acyl-phosphate (acyl-PO(4)) from acyl-[acyl-carrier-protein] (acyl-ACP). This enzyme utilizes acyl-ACP as fatty acyl donor, but not acyl-CoA. This Staphylococcus saprophyticus subsp. saprophyticus (strain ATCC 15305 / DSM 20229 / NCIMB 8711 / NCTC 7292 / S-41) protein is Phosphate acyltransferase.